A 223-amino-acid chain; its full sequence is Ribosomal RNA small subunit methyltransferase G (223 aa).

S-adenosyl-L-methionine is bound by residues G82, L87, 133 to 134 (AE), and R151.

Belongs to the methyltransferase superfamily. RNA methyltransferase RsmG family.

It localises to the cytoplasm. Its function is as follows. Specifically methylates the N7 position of guanine in position 518 of 16S rRNA. The protein is Ribosomal RNA small subunit methyltransferase G of Corynebacterium glutamicum (strain ATCC 13032 / DSM 20300 / JCM 1318 / BCRC 11384 / CCUG 27702 / LMG 3730 / NBRC 12168 / NCIMB 10025 / NRRL B-2784 / 534).